Reading from the N-terminus, the 273-residue chain is Formamidopyrimidine-DNA glycosylase (273 aa).

Residue proline 2 is the Schiff-base intermediate with DNA of the active site. Glutamate 3 acts as the Proton donor in catalysis. Lysine 59 acts as the Proton donor; for beta-elimination activity in catalysis. Residues histidine 92 and arginine 111 each contribute to the DNA site. The FPG-type zinc-finger motif lies at 239–273 (KVYGKTGEPCVICGTPIEKIKLNGRGTHFCPHCQK). The active-site Proton donor; for delta-elimination activity is the arginine 263.

Belongs to the FPG family. In terms of assembly, monomer. Zn(2+) is required as a cofactor.

It catalyses the reaction Hydrolysis of DNA containing ring-opened 7-methylguanine residues, releasing 2,6-diamino-4-hydroxy-5-(N-methyl)formamidopyrimidine.. It carries out the reaction 2'-deoxyribonucleotide-(2'-deoxyribose 5'-phosphate)-2'-deoxyribonucleotide-DNA = a 3'-end 2'-deoxyribonucleotide-(2,3-dehydro-2,3-deoxyribose 5'-phosphate)-DNA + a 5'-end 5'-phospho-2'-deoxyribonucleoside-DNA + H(+). In terms of biological role, involved in base excision repair of DNA damaged by oxidation or by mutagenic agents. Acts as a DNA glycosylase that recognizes and removes damaged bases. Has a preference for oxidized purines, such as 7,8-dihydro-8-oxoguanine (8-oxoG). Has AP (apurinic/apyrimidinic) lyase activity and introduces nicks in the DNA strand. Cleaves the DNA backbone by beta-delta elimination to generate a single-strand break at the site of the removed base with both 3'- and 5'-phosphates. In Listeria innocua serovar 6a (strain ATCC BAA-680 / CLIP 11262), this protein is Formamidopyrimidine-DNA glycosylase.